Here is a 319-residue protein sequence, read N- to C-terminus: Beta-xylosidase (319 aa).

Residue aspartate 14 is the Proton acceptor of the active site. Glutamate 222 (proton donor) is an active-site residue.

The protein belongs to the glycosyl hydrolase 43 family.

It carries out the reaction Hydrolysis of (1-&gt;4)-beta-D-xylans, to remove successive D-xylose residues from the non-reducing termini.. In terms of biological role, exoxylanase capable of acting on certain xylans and xylooligosaccharides. In Xylanibacter ruminicola (Prevotella ruminicola), this protein is Beta-xylosidase (xynB).